Here is a 1448-residue protein sequence, read N- to C-terminus: Murinoglobulin-2 (1448 aa).

Positions methionine 1–leucine 24 are cleaved as a signal peptide. Intrachain disulfides connect cysteine 48–cysteine 86, cysteine 245–cysteine 277, and cysteine 263–cysteine 289. The N-linked (GlcNAc...) asparagine glycan is linked to asparagine 55. Asparagine 295, asparagine 315, asparagine 387, and asparagine 502 each carry an N-linked (GlcNAc...) asparagine glycan. 3 disulfide bridges follow: cysteine 462–cysteine 556, cysteine 588–cysteine 748, and cysteine 636–cysteine 681. Positions proline 678–arginine 709 are bait region. N-linked (GlcNAc...) asparagine glycans are attached at residues asparagine 751 and asparagine 846. 4 disulfide bridges follow: cysteine 824-cysteine 860, cysteine 898-cysteine 1295, cysteine 1056-cysteine 1101, and cysteine 1326-cysteine 1441. The isoglutamyl cysteine thioester (Cys-Gln) cross-link spans cysteine 949–glutamine 952. An N-linked (GlcNAc...) asparagine glycan is attached at asparagine 968. Residues asparagine 1114, asparagine 1285, and asparagine 1398 are each glycosylated (N-linked (GlcNAc...) asparagine).

The protein belongs to the protease inhibitor I39 (alpha-2-macroglobulin) family. Monomer.

The protein resides in the secreted. In terms of biological role, a proteinase activates the inhibitor by specific proteolysis in the bait region, which, by an unknown mechanism leads to reaction at the cysteinyl-glutamyl internal thiol ester site and to a conformational change, whereby the proteinase is trapped and/or covalently bound to the inhibitor. While in the tetrameric proteinase inhibitors steric inhibition is sufficiently strong, monomeric forms need a covalent linkage between the activated glutamyl residue of the original thiol ester and a terminal amino group of a lysine or another nucleophilic group on the proteinase, for inhibition to be effective. In Rattus norvegicus (Rat), this protein is Murinoglobulin-2.